A 256-amino-acid polypeptide reads, in one-letter code: Ribonuclease 3 (256 aa).

The region spanning 3-125 (LDALQQRLGY…IVGAVFLDAG (123 aa)) is the RNase III domain. Mg(2+) is bound at residue glutamate 38. Aspartate 42 is an active-site residue. Residues aspartate 111 and glutamate 114 each coordinate Mg(2+). Residue glutamate 114 is part of the active site. The DRBM domain occupies 152 to 222 (DAKTLLQEYL…AKLALDEVQK (71 aa)). Positions 229-256 (KRSRAERTGKTRKQPQPQDPQLSLRLKE) are disordered.

Belongs to the ribonuclease III family. In terms of assembly, homodimer. Mg(2+) is required as a cofactor.

The protein localises to the cytoplasm. The catalysed reaction is Endonucleolytic cleavage to 5'-phosphomonoester.. Functionally, digests double-stranded RNA. Involved in the processing of primary rRNA transcript to yield the immediate precursors to the large and small rRNAs (23S and 16S). Processes some mRNAs, and tRNAs when they are encoded in the rRNA operon. Processes pre-crRNA and tracrRNA of type II CRISPR loci if present in the organism. In Cupriavidus taiwanensis (strain DSM 17343 / BCRC 17206 / CCUG 44338 / CIP 107171 / LMG 19424 / R1) (Ralstonia taiwanensis (strain LMG 19424)), this protein is Ribonuclease 3.